We begin with the raw amino-acid sequence, 324 residues long: COP9 signalosome complex subunit 6 (324 aa).

An MPN domain is found at 38–171 (VALHPLVILN…VSVFESVIDI (134 aa)).

It belongs to the peptidase M67A family. CSN6 subfamily. As to quaternary structure, component of the CSN complex, composed of COPS1/GPS1, COPS2, COPS3, COPS4, COPS5, COPS6, COPS7 (COPS7A or COPS7B), COPS8 and COPS9. In the complex, it probably interacts directly with COPS2, COPS4, COPS5, COPS7 (COPS7A or COPS7B) and COPS9. Interacts with the translation initiation factor EIF3S6. Interacts weakly with RBX1. Directly interacts with COP1 and 14-3-3 protein sigma/SFN. Interacts with ERCC6.

The protein resides in the cytoplasm. The protein localises to the nucleus. Component of the COP9 signalosome complex (CSN), a complex involved in various cellular and developmental processes. The CSN complex is an essential regulator of the ubiquitin (Ubl) conjugation pathway by mediating the deneddylation of the cullin subunits of SCF-type E3 ligase complexes, leading to decrease the Ubl ligase activity of SCF-type complexes such as SCF, CSA or DDB2. The complex is also involved in phosphorylation of p53/TP53, c-jun/JUN, IkappaBalpha/NFKBIA, ITPK1 and IRF8, possibly via its association with CK2 and PKD kinases. CSN-dependent phosphorylation of TP53 and JUN promotes and protects degradation by the Ubl system, respectively. Has some glucocorticoid receptor-responsive activity. Stabilizes COP1 through reducing COP1 auto-ubiquitination and decelerating COP1 turnover rate, hence regulates the ubiquitination of COP1 targets, including SFN. The chain is COP9 signalosome complex subunit 6 (COPS6) from Bos taurus (Bovine).